Here is a 317-residue protein sequence, read N- to C-terminus: MKVFNKKVAIIGTGFVGTSIAYSMINQGIANELILVDIDKAKSEGEAIDLLDGVSWGQENVNVWAGDYQDCQDADIVVITAGANQKPGQSRLDLVSINAEIMKTIVNNIMKSGFDGILVIASNPVDVLTYVAWQASGLPVSRVIGTGTTLDTTRFRKELSQRLAIDPRNVHGYIIGEHGDSEVAVWSHTMIGTKPILEIVDTTERLTSDDLPIISDKVKNTAYEIIDRKQATYYGIGMSTARIVKAILNNEQAILPVSAYLDGQYGQQDVFTGIPAVVGNQGVTDIIELNLNAAEKELFQKSVTQLKQVMASLQPNA.

Residues valine 16, aspartate 37, lysine 42, tyrosine 68, and 82–83 (GA) contribute to the NAD(+) site. Glutamine 85 and arginine 91 together coordinate substrate. NAD(+)-binding positions include threonine 104, 121–123 (ASN), and threonine 146. 123-126 (NPVD) serves as a coordination point for substrate. 151-154 (DTTR) lines the substrate pocket. Beta-D-fructose 1,6-bisphosphate is bound by residues arginine 156 and histidine 171. Histidine 178 (proton acceptor) is an active-site residue. A Phosphotyrosine modification is found at tyrosine 223. Threonine 232 serves as a coordination point for substrate.

Belongs to the LDH/MDH superfamily. LDH family. Homotetramer.

Its subcellular location is the cytoplasm. It catalyses the reaction (S)-lactate + NAD(+) = pyruvate + NADH + H(+). It participates in fermentation; pyruvate fermentation to lactate; (S)-lactate from pyruvate: step 1/1. Its activity is regulated as follows. Allosterically activated by fructose 1,6-bisphosphate (FBP). Functionally, catalyzes the conversion of lactate to pyruvate. The polypeptide is L-lactate dehydrogenase 2 (Enterococcus faecalis (strain ATCC 700802 / V583)).